A 156-amino-acid chain; its full sequence is Ribosomal RNA large subunit methyltransferase H (156 aa).

Residues Leu73, Gly104, and 123–128 (ISSLTL) each bind S-adenosyl-L-methionine.

Belongs to the RNA methyltransferase RlmH family. In terms of assembly, homodimer.

Its subcellular location is the cytoplasm. The catalysed reaction is pseudouridine(1915) in 23S rRNA + S-adenosyl-L-methionine = N(3)-methylpseudouridine(1915) in 23S rRNA + S-adenosyl-L-homocysteine + H(+). Functionally, specifically methylates the pseudouridine at position 1915 (m3Psi1915) in 23S rRNA. The protein is Ribosomal RNA large subunit methyltransferase H of Herminiimonas arsenicoxydans.